A 353-amino-acid polypeptide reads, in one-letter code: Quinolinate synthase (353 aa).

Positions 47 and 68 each coordinate iminosuccinate. Residue cysteine 113 coordinates [4Fe-4S] cluster. Iminosuccinate is bound by residues 139-141 (YAN) and serine 156. Cysteine 200 serves as a coordination point for [4Fe-4S] cluster. Iminosuccinate contacts are provided by residues 226 to 228 (HPE) and threonine 243. Residue cysteine 297 participates in [4Fe-4S] cluster binding.

It belongs to the quinolinate synthase family. Type 1 subfamily. Requires [4Fe-4S] cluster as cofactor.

The protein resides in the cytoplasm. It catalyses the reaction iminosuccinate + dihydroxyacetone phosphate = quinolinate + phosphate + 2 H2O + H(+). The protein operates within cofactor biosynthesis; NAD(+) biosynthesis; quinolinate from iminoaspartate: step 1/1. Catalyzes the condensation of iminoaspartate with dihydroxyacetone phosphate to form quinolinate. The protein is Quinolinate synthase of Pectobacterium carotovorum subsp. carotovorum (strain PC1).